A 449-amino-acid chain; its full sequence is Neurexin-1a-beta (449 aa).

The N-terminal stretch at 1 to 38 is a signal peptide; the sequence is MLRLWPGGAPGGLASILLRISLRLALWLPPLTLGSALA. Residues 39-373 are Extracellular-facing; that stretch reads EGPGELYVPQ…EVIRESSSTT (335 aa). Residues 71-272 form the Laminin G-like domain; the sequence is TTYIFGRDGG…DPNVRVEGSA (202 aa). The disordered stretch occupies residues 276–366; it reads GDMPSSSITP…AKGYPSPEVI (91 aa). Over residues 280 to 311 the composition is skewed to low complexity; it reads SSSITPQSSVSAAGNRSETSPSITDITTTTAS. Residues 312-322 are compositionally biased toward polar residues; sequence NRQGKQTTTPQ. Residues 374 to 394 traverse the membrane as a helical segment; sequence GMVVGIVAAAALCILILLYAM. The Cytoplasmic segment spans residues 395–449; the sequence is YKYRNRDEGSYHVDESRNYISNSATQPNGAAVKEKPIGVPKNKKDKKNKDKEYYV. Residues 415–449 are disordered; sequence SNSATQPNGAAVKEKPIGVPKNKKDKKNKDKEYYV.

It belongs to the neurexin family.

It localises to the membrane. Its function is as follows. Neuronal cell surface protein that may be involved in cell recognition and cell adhesion. May play a role in formation or maintenance of synaptic junctions. The chain is Neurexin-1a-beta (nrxn1a) from Danio rerio (Zebrafish).